The chain runs to 152 residues: Deoxyuridine 5'-triphosphate nucleotidohydrolase (152 aa).

Substrate-binding positions include 71–73, Asn-84, 88–90, and Met-98; these read RSG and LID.

It belongs to the dUTPase family. Requires Mg(2+) as cofactor.

It catalyses the reaction dUTP + H2O = dUMP + diphosphate + H(+). It functions in the pathway pyrimidine metabolism; dUMP biosynthesis; dUMP from dCTP (dUTP route): step 2/2. Its function is as follows. This enzyme is involved in nucleotide metabolism: it produces dUMP, the immediate precursor of thymidine nucleotides and it decreases the intracellular concentration of dUTP so that uracil cannot be incorporated into DNA. In Citrobacter koseri (strain ATCC BAA-895 / CDC 4225-83 / SGSC4696), this protein is Deoxyuridine 5'-triphosphate nucleotidohydrolase.